The following is a 187-amino-acid chain: Insulin-like growth factor 2 (187 aa).

The first 23 residues, 1 to 23 (MCAARQILLLLLAFLAYALDSAA), serve as a signal peptide directing secretion. Positions 25–51 (YGTAETLCGGELVDTLQFVCGDRGFYF) are b. 3 cysteine pairs are disulfide-bonded: cysteine 32/cysteine 71, cysteine 44/cysteine 84, and cysteine 70/cysteine 75. The segment at 52-64 (SRPVGRNNRRINR) is c. The segment at 64–85 (RGIVEECCFRSCDLALLETYCA) is a. Positions 86 to 91 (KSVKSE) are d. A propeptide spans 92 to 187 (RDLSATSLAG…ASPEATGPQE (96 aa)) (e peptide). The disordered stretch occupies residues 162–187 (HRPLISLPSQRPPAPRASPEATGPQE).

Belongs to the insulin family.

It is found in the secreted. Functionally, the insulin-like growth factors, isolated from plasma, are structurally and functionally related to insulin but have a much higher growth-promoting activity. Acts as a ligand for integrin which is required for IGF2 signaling. The polypeptide is Insulin-like growth factor 2 (Gallus gallus (Chicken)).